The sequence spans 347 residues: NADH-quinone oxidoreductase subunit H (347 aa).

The next 9 membrane-spanning stretches (helical) occupy residues 13–33 (IIMIGQSLLLLVCLLVFIAYV), 50–70 (PNVVGPFGLFQSFADLLKFVF), 82–102 (AVFLLAPLVTVLLALSTWAVV), 115–135 (VGILYIFAISSLEVYGIIMGG), 161–181 (IGFVIVTVLLCVGSLNLTDIV), 198–218 (FLDWHWLSLFPMFIIFFISAL), 263–283 (CSLTTILFLGGWLPPVDIWIL), 286–306 (VPGIIWFMLKACFVFFMFAMV), and 321–341 (LGWKVFLPLSLAMVIIVAFVL).

Belongs to the complex I subunit 1 family. NDH-1 is composed of 14 different subunits. Subunits NuoA, H, J, K, L, M, N constitute the membrane sector of the complex.

The protein resides in the cell inner membrane. The catalysed reaction is a quinone + NADH + 5 H(+)(in) = a quinol + NAD(+) + 4 H(+)(out). NDH-1 shuttles electrons from NADH, via FMN and iron-sulfur (Fe-S) centers, to quinones in the respiratory chain. The immediate electron acceptor for the enzyme in this species is believed to be ubiquinone. Couples the redox reaction to proton translocation (for every two electrons transferred, four hydrogen ions are translocated across the cytoplasmic membrane), and thus conserves the redox energy in a proton gradient. This subunit may bind ubiquinone. This Rhizobium leguminosarum bv. trifolii (strain WSM2304) protein is NADH-quinone oxidoreductase subunit H.